Here is a 199-residue protein sequence, read N- to C-terminus: Histone deacetylase complex subunit SAP25 (199 aa).

Composition is skewed to polar residues over residues 151 to 163 (QMSQ…SSSA) and 184 to 199 (QGAD…THCP). Positions 151–199 (QMSQGEPRPSSSAVGPPDHTSDPPSPCGSPSSSQGADLSLPQTPDTHCP) are disordered.

May be a component of the mSIN3A corepressor complex. Interacts with SIN3A. Interacts with HDAC2.

It localises to the nucleus. The protein resides in the cytoplasm. In terms of biological role, involved in the transcriptional repression mediated by the mSIN3A but not the N-CoR corepressor complex. This chain is Histone deacetylase complex subunit SAP25 (SAP25), found in Homo sapiens (Human).